The chain runs to 816 residues: Endo-acting ulvan lyase (816 aa).

The signal sequence occupies residues M1 to S23.

Belongs to the polysaccharide lyase family.

Its subcellular location is the cell surface. It is found in the periplasm. Functionally, ulvan lyase involved in ulvan degradation. Ulvan is the main polysaccharide component of the Ulvales (green seaweed) cell wall. It is composed of disaccharide building blocks comprising 3-sulfated rhamnose (Rha3S) linked to D-glucuronic acid (GlcA), L-iduronic acid (IduA), or D-xylose (Xyl). Ulvan lyase catalyzes the endolytic cleavage of the glycosidic bond between Rha3S and the uronic acids GlcA or IduA, producing oligosaccharides that have unsaturated 4-deoxy-L-threo-hex-4-enopyranosiduronic acid (deltaUA) at the non-reducing end. This results eventually in the degradation of the ulvan polysaccharide into deltaUA-Rha3S disaccharides and deltaUA-Rha3S-Xyl-Rha3S tetrasaccharides. This is Endo-acting ulvan lyase from Formosa agariphila (strain DSM 15362 / KCTC 12365 / LMG 23005 / KMM 3901 / M-2Alg 35-1).